Here is a 462-residue protein sequence, read N- to C-terminus: S-alkyl-thiohydroximate lyase SUR1 (462 aa).

The protein belongs to the class-I pyridoxal-phosphate-dependent aminotransferase family. Requires pyridoxal 5'-phosphate as cofactor.

Its function is as follows. C-S lyase involved in glucosinolate biosynthesis. Converts S-(alkylacetohydroximoyl)-L-cysteine to thiohydroximate. Functions in auxin homeostasis. Probably required for glucosinolate activation in response to pathogens. This Arabidopsis thaliana (Mouse-ear cress) protein is S-alkyl-thiohydroximate lyase SUR1 (SUR1).